We begin with the raw amino-acid sequence, 92 residues long: YcgL domain-containing protein Shewmr7_2249 (92 aa).

The 85-residue stretch at 1 to 85 (MLCAVYKSSR…PQVNLLAEHR (85 aa)) folds into the YcgL domain.

This is YcgL domain-containing protein Shewmr7_2249 from Shewanella sp. (strain MR-7).